Consider the following 331-residue polypeptide: Ribosomal RNA small subunit methyltransferase H (331 aa).

S-adenosyl-L-methionine is bound by residues 56 to 58, Asp-76, Phe-100, Asp-122, and Gln-129; that span reads GGH.

It belongs to the methyltransferase superfamily. RsmH family.

Its subcellular location is the cytoplasm. It carries out the reaction cytidine(1402) in 16S rRNA + S-adenosyl-L-methionine = N(4)-methylcytidine(1402) in 16S rRNA + S-adenosyl-L-homocysteine + H(+). Functionally, specifically methylates the N4 position of cytidine in position 1402 (C1402) of 16S rRNA. This Chromohalobacter salexigens (strain ATCC BAA-138 / DSM 3043 / CIP 106854 / NCIMB 13768 / 1H11) protein is Ribosomal RNA small subunit methyltransferase H.